Consider the following 111-residue polypeptide: Antitoxin PrlF (111 aa).

The SpoVT-AbrB domain occupies 12–59; that stretch reads TTESKVTIRGQTTIPAPVREALKLKPGLDSIHYEILPGGQVFMCRLGD.

Homodimer; forms a complex with YhaV with stoichiometry PrlF(2)-YhaV(4), possibly as a YhaV(2)-PrlF(2)-YhaV(2) complex like the MazFE complex.

The protein localises to the cytoplasm. Functionally, antitoxin component of a type II toxin-antitoxin (TA) system. Labile antitoxin that binds to the YhaV toxin and neutralizes its ribonuclease activity. Also acts as a transcription factor. The YhaV/PrlF complex binds the prlF-yhaV operon, probably negatively regulating its expression. The polypeptide is Antitoxin PrlF (prlF) (Escherichia coli O6:H1 (strain CFT073 / ATCC 700928 / UPEC)).